The following is a 291-amino-acid chain: Diaminopimelate epimerase (291 aa).

Substrate-binding residues include N13, Q46, and N66. C75 acts as the Proton donor in catalysis. Substrate contacts are provided by residues 76–77 (GN), N170, N203, and 221–222 (ER). C230 acts as the Proton acceptor in catalysis. 231-232 (GS) is a substrate binding site.

Belongs to the diaminopimelate epimerase family. As to quaternary structure, homodimer.

It localises to the cytoplasm. The catalysed reaction is (2S,6S)-2,6-diaminopimelate = meso-2,6-diaminopimelate. It participates in amino-acid biosynthesis; L-lysine biosynthesis via DAP pathway; DL-2,6-diaminopimelate from LL-2,6-diaminopimelate: step 1/1. In terms of biological role, catalyzes the stereoinversion of LL-2,6-diaminopimelate (L,L-DAP) to meso-diaminopimelate (meso-DAP), a precursor of L-lysine and an essential component of the bacterial peptidoglycan. The sequence is that of Diaminopimelate epimerase from Albidiferax ferrireducens (strain ATCC BAA-621 / DSM 15236 / T118) (Rhodoferax ferrireducens).